The primary structure comprises 637 residues: Poly(U)-binding-splicing factor hfp (637 aa).

Composition is skewed to basic and acidic residues over residues 1–20 (MGSNDRASRSPRSDDQREIS) and 28–37 (TRSDSGKSTD). The segment at 1–41 (MGSNDRASRSPRSDDQREISDMPATKRTRSDSGKSTDSKIP) is disordered. Ser13 and Ser30 each carry phosphoserine. 2 consecutive RRM domains span residues 130–208 (CRVY…RPSN) and 227–305 (NRIY…RSIT). The RRM 3; atypical domain occupies 537–627 (RVIILRNMVG…RRVVAELYDQ (91 aa)).

It belongs to the RRM half pint family. In terms of assembly, interacts with enc. However, given the cytoplasmic localization of enc, the relevance of such interaction is unclear. Expressed in all germline cells and within the follicle cell.

The protein resides in the nucleus. Functionally, splicing factor that regulates oogenesis and controls both mitosis and mRNA localization in the germline by regulating mRNA splicing of a subset of genes within the ovary. Probably acts by regulating the alternative splice site selection of the otu transcript. Also regulates the alternative splicing of eIF4E1 and grk, while it is not involved in the splicing of par-1, sqd or psq. Involved in the alternative splicing of the bicistronic pre-mRNA encoding Kdm3 and CG8176; required for the efficient production of mRNA encoding Kdm3 and Kdm3-mediated regulation of rhino-dependent piRNA production. The sequence is that of Poly(U)-binding-splicing factor hfp from Drosophila melanogaster (Fruit fly).